A 176-amino-acid polypeptide reads, in one-letter code: Ribosome rescue factor SmrB (176 aa).

Residues 97–172 (LDMHGMTQQE…GDGALLVLLS (76 aa)) form the Smr domain.

It belongs to the SmrB family. In terms of assembly, associates with collided ribosomes, but not with correctly translating polysomes.

Its function is as follows. Acts as a ribosome collision sensor. Detects stalled/collided disomes (pairs of ribosomes where the leading ribosome is stalled and a second ribosome has collided with it) and endonucleolytically cleaves mRNA at the 5' boundary of the stalled ribosome. Stalled/collided disomes form a new interface (primarily via the 30S subunits) that binds SmrB. Cleaved mRNA becomes available for tmRNA ligation, leading to ribosomal subunit dissociation and rescue of stalled ribosomes. The chain is Ribosome rescue factor SmrB from Vibrio vulnificus (strain CMCP6).